A 527-amino-acid chain; its full sequence is Amine oxidase [flavin-containing] A (527 aa).

An N-acetylmethionine modification is found at Met1. The Cytoplasmic portion of the chain corresponds to 1-497 (MENQEKASIA…HTFWERNLPS (497 aa)). Position 383 is a phosphoserine (Ser383). At Cys406 the chain carries S-8alpha-FAD cysteine. A helical; Anchor for type IV membrane protein transmembrane segment spans residues 498 to 518 (VSGLLKIIGFSTSVTALGFVL). The Mitochondrial intermembrane portion of the chain corresponds to 519 to 527 (YKYKLLPRS). The segment at 520 to 522 (KYK) is interaction with membrane phospholipid headgroups.

It belongs to the flavin monoamine oxidase family. Monomer, homo- or heterodimer (containing two subunits of similar size). Each subunit contains a covalently bound flavin. Enzymatically active as monomer. Requires FAD as cofactor.

Its subcellular location is the mitochondrion outer membrane. The catalysed reaction is a secondary aliphatic amine + O2 + H2O = a primary amine + an aldehyde + H2O2. The enzyme catalyses a primary methyl amine + O2 + H2O = an aldehyde + H2O2 + NH4(+). It catalyses the reaction (R)-adrenaline + O2 + H2O = (R)-3,4-dihydroxymandelaldehyde + methylamine + H2O2. It carries out the reaction dopamine + O2 + H2O = 3,4-dihydroxyphenylacetaldehyde + H2O2 + NH4(+). The catalysed reaction is tyramine + O2 + H2O = (4-hydroxyphenyl)acetaldehyde + H2O2 + NH4(+). The enzyme catalyses (R)-noradrenaline + O2 + H2O = (R)-3,4-dihydroxymandelaldehyde + H2O2 + NH4(+). It catalyses the reaction serotonin + O2 + H2O = (5-hydroxyindol-3-yl)acetaldehyde + H2O2 + NH4(+). It carries out the reaction kynuramine + O2 + H2O = 3-(2-aminophenyl)-3-oxopropanal + H2O2 + NH4(+). The catalysed reaction is tryptamine + O2 + H2O = indole-3-acetaldehyde + H2O2 + NH4(+). The enzyme catalyses 2-phenylethylamine + O2 + H2O = 2-phenylacetaldehyde + H2O2 + NH4(+). Catalyzes the oxidative deamination of primary and some secondary amine such as neurotransmitters, with concomitant reduction of oxygen to hydrogen peroxide and has important functions in the metabolism of neuroactive and vasoactive amines in the central nervous system and peripheral tissues. Preferentially oxidizes serotonin. Also catalyzes the oxidative deamination of kynuramine to 3-(2-aminophenyl)-3-oxopropanal that can spontaneously condense to 4-hydroxyquinoline. This is Amine oxidase [flavin-containing] A from Pongo abelii (Sumatran orangutan).